Reading from the N-terminus, the 116-residue chain is Protein cop (116 aa).

Putative control of replication message. In Staphylococcus aureus, this protein is Protein cop (cop).